We begin with the raw amino-acid sequence, 519 residues long: Protein BANP (519 aa).

Ser-19, Ser-90, and Ser-100 each carry phosphoserine. A coiled-coil region spans residues 53–90 (IKTICLRLDSIEAKLQALEATCKSLEEKLDLVTNKQHS). Lys-133 participates in a covalent cross-link: Glycyl lysine isopeptide (Lys-Gly) (interchain with G-Cter in SUMO2). Residues 152–342 (NAVPGRRQNT…FSRRTPNSSS (191 aa)) form an interaction with CUX1 and HDAC1 region. Residues 168–177 (GQEDSHHEDG) show a composition bias toward basic and acidic residues. The tract at residues 168-196 (GQEDSHHEDGESGSEASDSVSSCGQAGSQ) is disordered. The span at 180-189 (GSEASDSVSS) shows a compositional bias: low complexity. The region spanning 226–322 (EMRVRCAIIP…SKCRTAWRRK (97 aa)) is the BEN domain. An N6-acetyllysine modification is found at Lys-275. The disordered stretch occupies residues 327–364 (SLAVKSFSRRTPNSSSYCPSEPMMSTPPPASELPQPQP). Residues 335–344 (RRTPNSSSYC) show a composition bias toward polar residues. Residues Thr-337 and Thr-352 each carry the phosphothreonine modification. The DNA-binding stretch occupies residues 342–393 (SYCPSEPMMSTPPPASELPQPQPQPQALHYALANAQQVQIHQIGEDGQVQVG). The span at 351-364 (STPPPASELPQPQP) shows a compositional bias: pro residues.

This sequence belongs to the BANP/SMAR1 family. In terms of assembly, part of a corepressor complex containing BANP, HDAC1, SIN3A, SIN3B, RBL1 and RBL2. Forms a trimeric complex in the nucleus consisting of BANP, HDAC6 and KHDRBS1/SAM68; HDAC6 keeps KHDRBS1 in a deacetylated state which inhibits the inclusion of CD44 alternate exons. The complex is disrupted by MAPK1/MAPK3-mediated phosphorylation of BANP which results in BANP export to the cytoplasm. This facilitates acetylation of KHDRBS1 and CD44 variant exon inclusion. Interacts with TP53. Interacts with CUX1/CDP. Interacts with HDAC1. MAPK1/MAPK3-mediated phosphorylation at Thr-337 and Thr-352 results in export to the cytoplasm. In terms of tissue distribution, down-regulated in breast cancer cell lines.

The protein resides in the nucleus. It is found in the nucleus speckle. It localises to the cytoplasm. Its function is as follows. Controls V(D)J recombination during T-cell development by repressing T-cell receptor (TCR) beta enhancer function. Binds to scaffold/matrix attachment region beta (S/MARbeta), an ATC-rich DNA sequence located upstream of the TCR beta enhancer. Represses cyclin D1 transcription by recruiting HDAC1 to its promoter, thereby diminishing H3K9ac, H3S10ph and H4K8ac levels. Promotes TP53 activation, which causes cell cycle arrest. Plays a role in the regulation of alternative splicing. Binds to CD44 pre-mRNA and negatively regulates the inclusion of CD44 proximal variable exons v2-v6 but has no effect on distal variable exons v7-v10. This Homo sapiens (Human) protein is Protein BANP (BANP).